The primary structure comprises 384 residues: Substance-K receptor (384 aa).

The Extracellular portion of the chain corresponds to 1-32 (MGGRAIVTDTNIFSGLESNTTGVTAFSMPAWQ). A glycan (N-linked (GlcNAc...) asparagine) is linked at asparagine 19. A helical transmembrane segment spans residues 33–56 (LALWATAYLGLVLVAVTGNATVIW). Over 57-69 (IILAHERMRTVTN) the chain is Cytoplasmic. Residues 70–90 (YFIINLALADLCMAAFNATFN) form a helical membrane-spanning segment. Over 91 to 107 (FVYASHNIWYFGRAFCY) the chain is Extracellular. A disulfide bridge links cysteine 106 with cysteine 181. The chain crosses the membrane as a helical span at residues 108 to 129 (FQNLFPITAMFVSIYSMTAIAA). Topologically, residues 130 to 149 (DRYMAIVHPFQPRLSAPITK) are cytoplasmic. A helical transmembrane segment spans residues 150–170 (ATIAGIWLVALALASPQCFYS). The Extracellular segment spans residues 171–196 (TITVDQGATKCVVAWPNDNGGKMLLL). A helical membrane pass occupies residues 197–218 (YHLVVFVLVYFLPLVVMFVAYS). Residues 219–251 (VIGLTLWKRAVPRHQAHGANLRHLHAKKKFVKA) lie on the Cytoplasmic side of the membrane. A helical transmembrane segment spans residues 252–272 (MVLVVLTFAICWLPYHLYFIL). The Extracellular segment spans residues 273 to 290 (GSFQKDIYYRKFIQQVYL). Residues 291 to 310 (ALFWLAMSSTMYNPIIYCCL) form a helical membrane-spanning segment. Residues 311–384 (NHRFRSGFRL…SPQDVEPAAP (74 aa)) lie on the Cytoplasmic side of the membrane. Cysteine 324 is lipidated: S-palmitoyl cysteine.

Belongs to the G-protein coupled receptor 1 family.

The protein resides in the cell membrane. Its function is as follows. This is a receptor for the tachykinin neuropeptide substance K (neurokinin A). It is associated with G proteins that activate a phosphatidylinositol-calcium second messenger system. The rank order of affinity of this receptor to tachykinins is: substance K &gt; neuromedin-K &gt; substance P. The chain is Substance-K receptor (TACR2) from Mesocricetus auratus (Golden hamster).